Consider the following 292-residue polypeptide: Ribosomal RNA small subunit methyltransferase A (292 aa).

Residues asparagine 28, leucine 30, glycine 55, glutamate 76, aspartate 101, and asparagine 126 each contribute to the S-adenosyl-L-methionine site.

It belongs to the class I-like SAM-binding methyltransferase superfamily. rRNA adenine N(6)-methyltransferase family. RsmA subfamily.

Its subcellular location is the cytoplasm. It carries out the reaction adenosine(1518)/adenosine(1519) in 16S rRNA + 4 S-adenosyl-L-methionine = N(6)-dimethyladenosine(1518)/N(6)-dimethyladenosine(1519) in 16S rRNA + 4 S-adenosyl-L-homocysteine + 4 H(+). Its function is as follows. Specifically dimethylates two adjacent adenosines (A1518 and A1519) in the loop of a conserved hairpin near the 3'-end of 16S rRNA in the 30S particle. May play a critical role in biogenesis of 30S subunits. This chain is Ribosomal RNA small subunit methyltransferase A, found in Bacillus mycoides (strain KBAB4) (Bacillus weihenstephanensis).